The primary structure comprises 201 residues: FMN-dependent NADH:quinone oxidoreductase (201 aa).

Residues Ser10, 16–18 (SQS), and 96–99 (MYNF) each bind FMN.

Belongs to the azoreductase type 1 family. As to quaternary structure, homodimer. The cofactor is FMN.

It carries out the reaction 2 a quinone + NADH + H(+) = 2 a 1,4-benzosemiquinone + NAD(+). It catalyses the reaction N,N-dimethyl-1,4-phenylenediamine + anthranilate + 2 NAD(+) = 2-(4-dimethylaminophenyl)diazenylbenzoate + 2 NADH + 2 H(+). In terms of biological role, quinone reductase that provides resistance to thiol-specific stress caused by electrophilic quinones. Also exhibits azoreductase activity. Catalyzes the reductive cleavage of the azo bond in aromatic azo compounds to the corresponding amines. The polypeptide is FMN-dependent NADH:quinone oxidoreductase (Sodalis glossinidius (strain morsitans)).